Here is a 355-residue protein sequence, read N- to C-terminus: dTDP-glucose 4,6-dehydratase (355 aa).

NAD(+)-binding positions include F12–I13, D33–T36, D59–I60, L81–S85, and T100. S85 lines the substrate pocket. T134 is a binding site for substrate. D135 serves as the catalytic Proton donor. Residues E136 and Y160 each act as proton acceptor in the active site. Y160 to K164 provides a ligand contact to NAD(+). Position 189 (N189) interacts with substrate. N190 is an NAD(+) binding site. Substrate is bound by residues K199–L200, P215–Y217, R224, N259, and D293–H297.

The protein belongs to the NAD(P)-dependent epimerase/dehydratase family. dTDP-glucose dehydratase subfamily. As to quaternary structure, homodimer. NAD(+) is required as a cofactor.

It carries out the reaction dTDP-alpha-D-glucose = dTDP-4-dehydro-6-deoxy-alpha-D-glucose + H2O. It functions in the pathway carbohydrate biosynthesis; dTDP-L-rhamnose biosynthesis. It participates in bacterial outer membrane biogenesis; LPS O-antigen biosynthesis. Its function is as follows. Catalyzes the dehydration of dTDP-D-glucose to form dTDP-6-deoxy-D-xylo-4-hexulose via a three-step process involving oxidation, dehydration and reduction. This Neisseria meningitidis serogroup B (strain ATCC BAA-335 / MC58) protein is dTDP-glucose 4,6-dehydratase (rfbB1).